Reading from the N-terminus, the 453-residue chain is Tyrosine-protein phosphatase non-receptor type 18 (453 aa).

The region spanning 26–291 (LAREFSDIKA…RFLYHTVAQL (266 aa)) is the Tyrosine-protein phosphatase domain. Substrate contacts are provided by residues D197, 229-235 (CSAGCGR), and Q276. The active-site Phosphocysteine intermediate is C229. A phosphotyrosine mark is found at Y381 and Y419. The tract at residues 384–453 (VAPRAQRPVA…RDPPAEWTRV (70 aa)) is disordered. Residues 442–453 (GPRDPPAEWTRV) are compositionally biased toward basic and acidic residues.

It belongs to the protein-tyrosine phosphatase family. Non-receptor class 4 subfamily. As to quaternary structure, interacts with PSTPIP1. In terms of tissue distribution, highest expression in bone marrow. Also expressed in kidney, lung, ovary, spleen, thymus and lymph node.

The protein localises to the nucleus. Its subcellular location is the cytoplasm. The enzyme catalyses O-phospho-L-tyrosyl-[protein] + H2O = L-tyrosyl-[protein] + phosphate. In terms of biological role, may be involved in growth and differentiation of hematopoietic cells. The polypeptide is Tyrosine-protein phosphatase non-receptor type 18 (Ptpn18) (Mus musculus (Mouse)).